A 449-amino-acid chain; its full sequence is Doublesex- and mab-3-related transcription factor A2 (449 aa).

A DNA-binding region (DM) is located at residues 57 to 104 (CARCRNHGVVSALKGHKRYCRWKDCMCAKCTLIAERQRVMAAQVALRR). The segment at 166–259 (KNQLSGSATP…PSPSSAASRH (94 aa)) is disordered. The segment covering 167–177 (NQLSGSATPQP) has biased composition (polar residues). Over residues 230–240 (GSVSSIGSDSG) the composition is skewed to low complexity. Residues 260–295 (MNAIDILTRVFPSHKRSVLELVLQGCGKDVVQAIEQ) form the DMA domain.

Belongs to the DMRT family.

It is found in the nucleus. Functionally, may be involved in sexual development. This chain is Doublesex- and mab-3-related transcription factor A2 (dmrta2), found in Oreochromis niloticus (Nile tilapia).